A 276-amino-acid chain; its full sequence is MHANPLSSFNRAQHGNLTNVEASQVKSAGTSSTTNIDSKNIEEHVADRLSDLGRPDGGWFFEKSLGTLKNLNLEQLAGIHDVLKLTDGVKNIVSFGAREGGFELAMQFRHDLYRSQHPDENSPHDAATHYLDAISLQSNKFTKLEKLQHVDVFKMQNPFWDVGYKNGIAHAKKMAFFITPEWLGSDFCKQEFQWLSETKNKDIKSAFVIFKDVDLKSKNMTSIFNFADFHKSRVMMASTPPESGLNNVKIENSVDLNFKRLLTDRESWELNNFLGD.

The span at 20–38 (VEASQVKSAGTSSTTNIDS) shows a compositional bias: polar residues. The tract at residues 20 to 39 (VEASQVKSAGTSSTTNIDSK) is disordered. The segment at 165–214 (KNGIAHAKKMAFFITPEWLGSDFCKQEFQWLSETKNKDIKSAFVIFKDVD) is TIR domain. Gln190 is a catalytic residue.

As to quaternary structure, homodimer.

The protein localises to the host cytoplasm. It localises to the host cytosol. It carries out the reaction NAD(+) = 3'cADPR + nicotinamide + H(+). Functionally, NAD(+) hydrolase (NADase) that cleaves NAD(+) into nicotinamide and 3' cyclic ADP-D-ribose (3'cADPR, v2-cADPR). Upon infiltration of A.thaliana with this bacteria an effector-triggered immunity-like phenotype (ETI-like, cell death with severe chlorosis) is seen, 3'cADPR levels rise while NAD(+) levels remain constant. Plant immune responses are suppressed. Triggers hypersensitive response-like cell death in Nicotiana tabacum cv. Xanthi and N.benthamiana when transiently expressed, depletes NAD(+) in N.benthamiana. Causes cell death upon induction in yeast due to NAD(+) depletion and/or 3'cADPR itself. Transgenic A.thaliana expressing HopAM1 suppresses its plant immune system upon challenge; the plants produce 3'cADPR without significantly depleting NAD(+). This is 3' cyclic ADP-D-ribose synthase HopAM1 from Pseudomonas syringae pv. tomato (strain ATCC BAA-871 / DC3000).